An 875-amino-acid chain; its full sequence is MKSAEIREAFLQYFESKGHSRVASSSLVPGNDPTLLFTNAGMVQFKDVFLGQDNRSYSRATSSQRCVRAGGKHNDLENVGYTARHHTFFEMLGNFSFGDYFKKDAINYAWEFLTSKEWLAIPTEKLCVTVYADDDEAYGIWANDVGVPEDRIIRIGDNKGGRYNSDNFWAMGDTGPCGPCTEIFYDHGEHIWGGRPGTPEEDGDRFIEIWNVVFMQFNRSVDGEMAPLPKPSVDTGMGLERIAAVMQHVHSNYEIDLFQALLEAAAQATQAEDKDAKSLRVIADHIRSCAFLVSDGVLPSNEGRGYVLRRIIRRAVRHGNKLGQTKPFFHTLVAALVEQMGEAYPELVRDQASIEKVLAAEEDQFAKTLEKGMVVLESALSELKGTIIPGEVIFTLYDTYGFPVDLTNDIARERELTLDMDGYDALMEQQKKRARESGSFKVDYSATATIEGHTNFVGYSELTGDASVTAILVDGENVDTLTEGQSGVIVLDTTPFYGESGGQAGDTGYIVFDGAKFEVQDCQKSGANHLHVGQLLAGAVKVGDKAQPVVDSAVRQATALNHSATHLLHAALRKVLGEHVTQKGSLVDSERLRFDFSHFEAVKPEELKQIESMVNEQIRLNSPVETELCDMEAAQQKGAMALFGEKYGDEVRVLSMGGAFSVELCGGTHVSRTGDIGLIRITSESGIASGVRRIEAVTGEKALSVIDASADTLNAAAKLLKASPENLLDKVEQLIAQNRQLEKSLAAAKSKLASSSADEWLSEATDIAGVKVLAKAVEGVDAKSLRDMMDKLKNKLGTSAVILASVNDDKISLVAGVSQDATSKIKAGDMVKHVAGLIGGKGGGRPDMAQGGGTDVEALPAAIGSVLDWAKGVIG.

Residues histidine 562, histidine 566, cysteine 665, and histidine 669 each contribute to the Zn(2+) site.

Belongs to the class-II aminoacyl-tRNA synthetase family. It depends on Zn(2+) as a cofactor.

It localises to the cytoplasm. The catalysed reaction is tRNA(Ala) + L-alanine + ATP = L-alanyl-tRNA(Ala) + AMP + diphosphate. In terms of biological role, catalyzes the attachment of alanine to tRNA(Ala) in a two-step reaction: alanine is first activated by ATP to form Ala-AMP and then transferred to the acceptor end of tRNA(Ala). Also edits incorrectly charged Ser-tRNA(Ala) and Gly-tRNA(Ala) via its editing domain. The chain is Alanine--tRNA ligase from Saccharophagus degradans (strain 2-40 / ATCC 43961 / DSM 17024).